Consider the following 123-residue polypeptide: Large ribosomal subunit protein uL29 (123 aa).

At Lys-19 the chain carries N6-acetyllysine. Lys-25 is covalently cross-linked (Glycyl lysine isopeptide (Lys-Gly) (interchain with G-Cter in SUMO2)). At Ser-29 the chain carries Phosphoserine. N6-acetyllysine is present on Lys-43. The tract at residues 100 to 123 is disordered; that stretch reads EKLKTKKQQRKERLYPLRKYAVKA.

Belongs to the universal ribosomal protein uL29 family. Component of the large ribosomal subunit.

It is found in the cytoplasm. In terms of biological role, component of the large ribosomal subunit. The ribosome is a large ribonucleoprotein complex responsible for the synthesis of proteins in the cell. The sequence is that of Large ribosomal subunit protein uL29 (Rpl35) from Mus musculus (Mouse).